The primary structure comprises 288 residues: HTH-type transcriptional regulator CzcR (288 aa).

The 58-residue stretch at 1–58 (MELRDLQIFKCVAHHKSITGAAKELNYVQSNVTARIKQLENELKTPLFNRHKKGVSLS) folds into the HTH lysR-type domain. Residues 18–37 (ITGAAKELNYVQSNVTARIK) constitute a DNA-binding region (H-T-H motif).

The protein belongs to the LysR transcriptional regulatory family.

The sequence is that of HTH-type transcriptional regulator CzcR (czcR) from Bacillus subtilis (strain 168).